An 88-amino-acid chain; its full sequence is Small ribosomal subunit protein bS20 (88 aa).

A disordered region spans residues 1-23 (MANTSSAKKATRKIARRAAINKN).

Belongs to the bacterial ribosomal protein bS20 family.

In terms of biological role, binds directly to 16S ribosomal RNA. In Mesorhizobium japonicum (strain LMG 29417 / CECT 9101 / MAFF 303099) (Mesorhizobium loti (strain MAFF 303099)), this protein is Small ribosomal subunit protein bS20.